The primary structure comprises 294 residues: MHPRFQTAFAQLADNLQSALAPILADKHFPALLTGEQVSSLKSATGLDEDALAFALLPLAAACARTPLSNFNVGAIARGVSGTWYFGANMEFIGATMQQTVHAEQSAISHAWLSGEKALAAITVNYTPCGHCRQFMNELNSGLDLRIHLPGREAHALRDYLPDAFGPKDLEIKTLLMDEQDHGFALTGDALSQAAIAAANRSHMPYSKSPSGVALECKDGRIFSGSYAENAAFNPTLPPLQGALILLNLKGYDYPDIQRAILAEKADAPLIQWDATAATLKALGCNTIDRVLLG.

CMP/dCMP-type deaminase domains are found at residues 48–168 and 186–294; these read DEDA…FGPK and LTGD…VLLG. Residue 89-91 coordinates substrate; that stretch reads NME. Histidine 102 serves as a coordination point for Zn(2+). Glutamate 104 serves as the catalytic Proton donor. 2 residues coordinate Zn(2+): cysteine 129 and cysteine 132.

Belongs to the cytidine and deoxycytidylate deaminase family. As to quaternary structure, homodimer. Requires Zn(2+) as cofactor.

It carries out the reaction cytidine + H2O + H(+) = uridine + NH4(+). The catalysed reaction is 2'-deoxycytidine + H2O + H(+) = 2'-deoxyuridine + NH4(+). This enzyme scavenges exogenous and endogenous cytidine and 2'-deoxycytidine for UMP synthesis. The chain is Cytidine deaminase from Escherichia fergusonii (strain ATCC 35469 / DSM 13698 / CCUG 18766 / IAM 14443 / JCM 21226 / LMG 7866 / NBRC 102419 / NCTC 12128 / CDC 0568-73).